The following is a 139-amino-acid chain: Orientotoxin-2 (139 aa).

As to expression, expressed by the venom gland.

It localises to the secreted. The catalysed reaction is a 1,2-diacyl-sn-glycero-3-phosphocholine + H2O = a 1-acyl-sn-glycero-3-phosphocholine + a fatty acid + H(+). Functionally, has a highly toxic phospholipase A2 activity. The chain is Orientotoxin-2 from Vespa orientalis (Oriental hornet).